A 366-amino-acid chain; its full sequence is Histidinol-phosphate aminotransferase (366 aa).

Position 226 is an N6-(pyridoxal phosphate)lysine (Lys226).

It belongs to the class-II pyridoxal-phosphate-dependent aminotransferase family. Histidinol-phosphate aminotransferase subfamily. Pyridoxal 5'-phosphate serves as cofactor.

The enzyme catalyses L-histidinol phosphate + 2-oxoglutarate = 3-(imidazol-4-yl)-2-oxopropyl phosphate + L-glutamate. Its pathway is amino-acid biosynthesis; L-histidine biosynthesis; L-histidine from 5-phospho-alpha-D-ribose 1-diphosphate: step 7/9. The protein is Histidinol-phosphate aminotransferase of Methanosarcina barkeri (strain Fusaro / DSM 804).